Here is a 324-residue protein sequence, read N- to C-terminus: S-methyl-5'-thioadenosine phosphorylase (324 aa).

Phosphate-binding positions include Ser14, 57 to 58, and 90 to 91; these read RH and SA. Met196 is a binding site for substrate. Ser197 provides a ligand contact to phosphate. 220–222 contacts substrate; that stretch reads DYD.

This sequence belongs to the PNP/MTAP phosphorylase family. MTAP subfamily. As to quaternary structure, homotrimer.

It localises to the cytoplasm. It is found in the nucleus. It carries out the reaction S-methyl-5'-thioadenosine + phosphate = 5-(methylsulfanyl)-alpha-D-ribose 1-phosphate + adenine. It functions in the pathway amino-acid biosynthesis; L-methionine biosynthesis via salvage pathway; S-methyl-5-thio-alpha-D-ribose 1-phosphate from S-methyl-5'-thioadenosine (phosphorylase route): step 1/1. Its function is as follows. Catalyzes the reversible phosphorylation of S-methyl-5'-thioadenosine (MTA) to adenine and 5-methylthioribose-1-phosphate. Involved in the breakdown of MTA, a major by-product of polyamine biosynthesis. Responsible for the first step in the methionine salvage pathway after MTA has been generated from S-adenosylmethionine. Has broad substrate specificity with 6-aminopurine nucleosides as preferred substrates. This Coprinopsis cinerea (strain Okayama-7 / 130 / ATCC MYA-4618 / FGSC 9003) (Inky cap fungus) protein is S-methyl-5'-thioadenosine phosphorylase.